Reading from the N-terminus, the 489-residue chain is Ribulose-1,5 bisphosphate carboxylase/oxygenase large subunit N-methyltransferase, chloroplastic (489 aa).

The N-terminal 37 residues, 1-37, are a transit peptide targeting the chloroplast; it reads MATIFSGGSVSPFLFHTNKGTSFTPKAPILHLKRSFS. One can recognise an SET domain in the interval 64-288; sequence EGVITAKTPV…AGEQVYIQYD (225 aa). S-adenosyl-L-methionine-binding positions include 80–82 and Arg222; that span reads EGL. Substrate-binding residues include Arg222, Arg226, and Asp239. 242–243 serves as a coordination point for S-adenosyl-L-methionine; that stretch reads NH. Tyr254, Tyr287, and Tyr300 together coordinate substrate.

Belongs to the class V-like SAM-binding methyltransferase superfamily. Plant protein-lysine LSMT methyltransferase family. In terms of assembly, homotrimer. As to expression, highly expressed in leaf.

The protein resides in the plastid. It localises to the chloroplast. It catalyses the reaction L-lysyl-[ribulose-1,5-bisphosphate carboxylase] + 3 S-adenosyl-L-methionine = N(6),N(6),N(6)-trimethyl-L-lysyl-[ribulose-1,5-bisphosphate carboxylase] + 3 S-adenosyl-L-homocysteine + 3 H(+). The catalysed reaction is [fructose-bisphosphate aldolase]-L-lysine + 3 S-adenosyl-L-methionine = [fructose-bisphosphate aldolase]-N(6),N(6),N(6)-trimethyl-L-lysine + 3 S-adenosyl-L-homocysteine + 3 H(+). In terms of biological role, methylates 'Lys-14' of the large subunit of RuBisCO. Can also use with lower efficiency chloroplastic fructose-bisphosphate aldolases and gamma-tocopherol methyltransferase as substrates, but not a cytosolic aldolase. This is Ribulose-1,5 bisphosphate carboxylase/oxygenase large subunit N-methyltransferase, chloroplastic (RBCMT) from Pisum sativum (Garden pea).